The following is a 118-amino-acid chain: MQSVTRQTARVLPQMGKQVSYLSTSGAWRATASGGDMVVEIKEPKTRTEKLMAFQKKLRAKTPLGKLDEFSRHPYQEKEPLKPWPNQTNPYTGEIGGPAGPEPTRYGDWERKGRVSDF.

A mitochondrion-targeting transit peptide spans 1-30 (MQSVTRQTARVLPQMGKQVSYLSTSGAWRA). Residues 65 to 118 (GKLDEFSRHPYQEKEPLKPWPNQTNPYTGEIGGPAGPEPTRYGDWERKGRVSDF) are disordered. Composition is skewed to basic and acidic residues over residues 66–81 (KLDE…KEPL) and 105–118 (RYGD…VSDF).

This sequence belongs to the SDHAF4 family. Interacts with SdhA in its FAD-bound form.

It is found in the mitochondrion matrix. Plays an essential role in the assembly of succinate dehydrogenase (SDH), an enzyme complex (also referred to as respiratory complex II) that is a component of both the tricarboxylic acid (TCA) cycle and the mitochondrial electron transport chain, and which couples the oxidation of succinate to fumarate with the reduction of ubiquinone (coenzyme Q) to ubiquinol. Binds to the flavoprotein subunit SdhA in its FAD-bound form, blocking the generation of excess reactive oxygen species (ROS) and facilitating its assembly with the iron-sulfur protein subunit SdhB into the SDH catalytic dimer. In Drosophila melanogaster (Fruit fly), this protein is Succinate dehydrogenase assembly factor 4, mitochondrial.